The primary structure comprises 179 residues: Putative mediator of RNA polymerase II transcription subunit 28 (179 aa).

Residues 81–119 (SAEKNKIQLKQEIYKVKKEIENKDRLIERYKNKVKEWKY) adopt a coiled-coil conformation.

This sequence belongs to the Mediator complex subunit 28 family. Component of the Mediator complex.

Its subcellular location is the nucleus. Its function is as follows. Component of the Mediator complex, a coactivator involved in the regulated transcription of nearly all RNA polymerase II-dependent genes. Mediator functions as a bridge to convey information from gene-specific regulatory proteins to the basal RNA polymerase II transcription machinery. Mediator is recruited to promoters by direct interactions with regulatory proteins and serves as a scaffold for the assembly of a functional preinitiation complex with RNA polymerase II and the general transcription factors. This chain is Putative mediator of RNA polymerase II transcription subunit 28 (med28), found in Dictyostelium discoideum (Social amoeba).